Consider the following 1058-residue polypeptide: Non-canonical non-ribosomal peptide synthetase FUB8 (1058 aa).

The tract at residues 43–365 is adenylation (A) domain; that stretch reads EISRDEPDRV…LASVVMHPDE (323 aa). The 78-residue stretch at 566 to 643 folds into the Carrier domain; it reads TTEDVVRSGI…QLSHSVWTHL (78 aa). Ser-601 carries the post-translational modification O-(pantetheine 4'-phosphoryl)serine. The interval 680 to 921 is thioester reductase (TR) domain; the sequence is LTGTTGEIGS…IPIDLLAEVI (242 aa).

It participates in mycotoxin biosynthesis. In terms of biological role, non-canonical non-ribosomal peptide synthetase; part of the gene cluster that mediates the biosynthesis of fusaric acid, a mycotoxin with low to moderate toxicity to animals and humans, but with high phytotoxic properties. L-aspartate is suggested as fusaric acid amino acid precursor that is activated and further processed to O-acetyl-L-homoserine by cluster enzymes aspartate kinase FUB3 and homoserine O-acetyltransferase FUB5, as well as enzymes of the primary metabolism. The polyketide synthase (PKS) FUB1 generates the triketide trans-2-hexenal which is presumptively released by the hydrolase FUB4 and linked to the NRPS-bound amino acid precursor by NAD(P)-dependent dehydrogenase FUB6. FUB1, FUB4, and the non-canonical NRPS Fub8 may form an enzyme complex. Further processing of the NRPS-bound intermediate might be carried out by FUB6 and the sulfhydrylase FUB7, enabling a spontaneous electrocyclization to close the carbon backbone of fusaric acid. Dihydrofusaric acid is likely to be released via reduction by the thioester reductase (TR) domain of FUB8 whereupon the final oxidation to fusaric acid may (also) be performed by the FMN-dependent dehydrogenase FUB9. The protein is Non-canonical non-ribosomal peptide synthetase FUB8 of Gibberella moniliformis (strain M3125 / FGSC 7600) (Maize ear and stalk rot fungus).